The primary structure comprises 104 residues: N(4)-acetylcytidine amidohydrolase (104 aa).

In terms of domain architecture, ASCH spans 7–93 (MTFFSRFEAD…EVIQEIYPGI (87 aa)). K22 functions as the Proton acceptor in the catalytic mechanism. T25 functions as the Nucleophile in the catalytic mechanism. Residue E75 is the Proton donor of the active site.

The protein belongs to the N(4)-acetylcytidine amidohydrolase family.

The enzyme catalyses N(4)-acetylcytidine + H2O = cytidine + acetate + H(+). It catalyses the reaction N(4)-acetyl-2'-deoxycytidine + H2O = 2'-deoxycytidine + acetate + H(+). It carries out the reaction N(4)-acetylcytosine + H2O = cytosine + acetate + H(+). In terms of biological role, catalyzes the hydrolysis of N(4)-acetylcytidine (ac4C). This chain is N(4)-acetylcytidine amidohydrolase, found in Vibrio vulnificus (strain CMCP6).